The primary structure comprises 961 residues: Copper-exporting P-type ATPase (961 aa).

2 consecutive HMA domains span residues 3-64 and 69-130; these read QTTL…YQAT and PDVE…YHAT. Positions 14, 17, 80, and 83 each coordinate Cu(+). Disordered regions lie at residues 131 to 153 and 178 to 201; these read QQGI…PESL and VLPT…TASA. Residues 142–151 show a composition bias toward polar residues; the sequence is LTHSAQSQPE. The 64-residue stretch at 226-289 folds into the HMA 3 domain; sequence ESVQLLLTGM…AVKNAGYGAE (64 aa). The Cu(+) site is built by cysteine 237 and cysteine 240. A run of 5 helical transmembrane segments spans residues 316–336, 345–365, 381–401, 565–585, and 592–612; these read AALG…GGSM, PWLI…GHFY, TLVA…NIWP, AVFV…WYFF, and VYTL…ALGL. Aspartate 650 serves as the catalytic 4-aspartylphosphate intermediate. Mg(2+)-binding residues include aspartate 847 and aspartate 851. The next 3 membrane-spanning stretches (helical) occupy residues 860-880, 906-926, and 928-948; these read VGIA…ITLM, LGAF…LYPF, and GTLL…ITVV.

It belongs to the cation transport ATPase (P-type) (TC 3.A.3) family. Type IB subfamily.

The protein localises to the cell membrane. It carries out the reaction Cu(+)(in) + ATP + H2O = Cu(+)(out) + ADP + phosphate + H(+). Functionally, involved in copper export. The chain is Copper-exporting P-type ATPase (copA) from Yersinia pestis.